A 104-amino-acid chain; its full sequence is uncharacterized protein (104 aa).

A disordered region spans residues 51–70 (NPGRSLDNNKDVSDKGRSEF). Basic and acidic residues predominate over residues 57-70 (DNNKDVSDKGRSEF).

It belongs to the protein-tyrosine phosphatase family.

This is an uncharacterized protein from Xanthomonas campestris pv. campestris (strain ATCC 33913 / DSM 3586 / NCPPB 528 / LMG 568 / P 25).